The following is a 354-amino-acid chain: MSDFERTEFELPPGVGHSQNEDLNPQQTAGDSDIDTSLRPKSLDEFIGQPKVRTQLDLVLGGARSRGVAPDHVLLAGPPGLGKTTMAMIIAQELGSSLRMTSGPALERAGDLAAMLSNLMEGDVLFIDEIHRMARPAEEMLYMAMEDFRIDVIVGKGPGATSIPIEIAPFTLVGATTRAGMLTGPLRDRFGFTAQMEFYDTADLTRVVTRAAGILGVDITGDAAAEIASRSRGTPRIANRLLRRVRDFADVNADGKITVEVARAALLVFDVDESGLDRLDRAVIEALVKGHGGGPVGVNTLALAVGEEPSTVEEVCEPYLVRAGMVSRTPRGRVATAAAWRHIGLEPPEGTIGL.

The disordered stretch occupies residues 1 to 38 (MSDFERTEFELPPGVGHSQNEDLNPQQTAGDSDIDTSL). Positions 2–199 (SDFERTEFEL…FGFTAQMEFY (198 aa)) are large ATPase domain (RuvB-L). Residues 17–30 (HSQNEDLNPQQTAG) are compositionally biased toward polar residues. ATP-binding positions include Leu-38, Arg-39, Gly-80, Lys-83, Thr-84, Thr-85, 146-148 (EDF), Arg-189, Tyr-199, and Arg-236. Residue Thr-84 participates in Mg(2+) binding. The segment at 200–270 (DTADLTRVVT…VARAALLVFD (71 aa)) is small ATPAse domain (RuvB-S). Residues 273-354 (ESGLDRLDRA…LEPPEGTIGL (82 aa)) form a head domain (RuvB-H) region. DNA is bound by residues Arg-328 and Arg-333.

It belongs to the RuvB family. Homohexamer. Forms an RuvA(8)-RuvB(12)-Holliday junction (HJ) complex. HJ DNA is sandwiched between 2 RuvA tetramers; dsDNA enters through RuvA and exits via RuvB. An RuvB hexamer assembles on each DNA strand where it exits the tetramer. Each RuvB hexamer is contacted by two RuvA subunits (via domain III) on 2 adjacent RuvB subunits; this complex drives branch migration. In the full resolvosome a probable DNA-RuvA(4)-RuvB(12)-RuvC(2) complex forms which resolves the HJ.

It is found in the cytoplasm. It catalyses the reaction ATP + H2O = ADP + phosphate + H(+). Functionally, the RuvA-RuvB-RuvC complex processes Holliday junction (HJ) DNA during genetic recombination and DNA repair, while the RuvA-RuvB complex plays an important role in the rescue of blocked DNA replication forks via replication fork reversal (RFR). RuvA specifically binds to HJ cruciform DNA, conferring on it an open structure. The RuvB hexamer acts as an ATP-dependent pump, pulling dsDNA into and through the RuvAB complex. RuvB forms 2 homohexamers on either side of HJ DNA bound by 1 or 2 RuvA tetramers; 4 subunits per hexamer contact DNA at a time. Coordinated motions by a converter formed by DNA-disengaged RuvB subunits stimulates ATP hydrolysis and nucleotide exchange. Immobilization of the converter enables RuvB to convert the ATP-contained energy into a lever motion, pulling 2 nucleotides of DNA out of the RuvA tetramer per ATP hydrolyzed, thus driving DNA branch migration. The RuvB motors rotate together with the DNA substrate, which together with the progressing nucleotide cycle form the mechanistic basis for DNA recombination by continuous HJ branch migration. Branch migration allows RuvC to scan DNA until it finds its consensus sequence, where it cleaves and resolves cruciform DNA. The sequence is that of Holliday junction branch migration complex subunit RuvB from Corynebacterium jeikeium (strain K411).